We begin with the raw amino-acid sequence, 27 residues long: Phospholipase A2 taicatoxin (27 aa).

It belongs to the phospholipase A2 family. Group I subfamily. Heterotrimer composed of an alpha-neurotoxin-like peptide of 8 kDa (AC P0CJ35), this neurotoxic phospholipase of 16 kDa and a serine protease inhibitor of 7 kDa (AC B7S4N9) at an approximate stoichiometry of 1:1:4; non-covalently linked. It depends on Ca(2+) as a cofactor. Post-translationally, contains 7 disulfide bonds. As to expression, expressed by the venom gland.

The protein localises to the secreted. The catalysed reaction is a 1,2-diacyl-sn-glycero-3-phosphocholine + H2O = a 1-acyl-sn-glycero-3-phosphocholine + a fatty acid + H(+). Functionally, heterotrimer: blocks the voltage-dependent L-type calcium channels from the heart, and the small conductance calcium-activated potassium channels in the chromaffin cells and in the brain. Is very toxic to mice. In terms of biological role, monomer: Snake venom phospholipase A2 (PLA2) that has neurotoxic activities. Voltage-dependently affects ionic currents in chick (Gallus domesticus) dorsal root ganglion cells. PLA2 catalyzes the calcium-dependent hydrolysis of the 2-acyl groups in 3-sn-phosphoglycerides. This is Phospholipase A2 taicatoxin from Oxyuranus scutellatus scutellatus (Australian taipan).